Here is an 896-residue protein sequence, read N- to C-terminus: Zinc finger protein 574 (896 aa).

3 consecutive C2H2-type zinc fingers follow at residues 16–38 (YVCS…QNSH), 76–98 (YQCL…QELH), and 126–148 (YECV…RQTH). Phosphoserine is present on Ser-164. The C2H2-type 4 zinc finger occupies 214 to 236 (YKCSECSQLFQLPADFLEHQATH). A compositionally biased stretch (low complexity) spans 259–272 (VEVPVSQPEPVPSS). The tract at residues 259–303 (VEVPVSQPEPVPSSDHSYELRNGEALGRDRRGRRARRNNSGEPGG) is disordered. Residues 274–287 (HSYELRNGEALGRD) are compositionally biased toward basic and acidic residues. Residue Ser-298 is modified to Phosphoserine. C2H2-type zinc fingers lie at residues 309-331 (LFCS…LRSH), 336-358 (FKCP…LGDH), 364-386 (FLCV…RRAH), and 392-413 (HSCP…RRTH). The disordered stretch occupies residues 434–460 (FPEPAPAETGEPEAPEPPVAEESSAEP). 6 consecutive C2H2-type zinc fingers follow at residues 466–489 (YRCL…RFVH), 495–517 (HKCS…LRTH), 523–545 (FPCP…RLTH), 551–573 (YRCG…RLVH), 579–601 (YRCQ…RYHH), and 607–630 (YKCR…LVAH). The C2H2-type 15; degenerate zinc finger occupies 636-659 (HRCSSCGAAFPSSLRLREHRCAAA). The segment at 667–689 (FECGTCGKKVGSAARLQAHEAAH) adopts a C2H2-type 16 zinc-finger fold. The tract at residues 687–733 (AAHAAAGPGEVLAKEPPAPRAPRAARTPITSPTTLGSAAPAAPAAPA) is disordered. A compositionally biased stretch (low complexity) spans 707–732 (APRAARTPITSPTTLGSAAPAAPAAP). Phosphoserine is present on Ser-717. 4 consecutive C2H2-type zinc fingers follow at residues 738-760 (LECS…RRIH), 766-788 (YPCP…RRLH), 794-816 (FACE…RRIH), and 822-844 (YSCP…RKTH). Arg-832 is modified (asymmetric dimethylarginine).

It belongs to the krueppel C2H2-type zinc-finger protein family.

Its subcellular location is the nucleus. Its function is as follows. May be involved in transcriptional regulation. This is Zinc finger protein 574 (ZNF574) from Bos taurus (Bovine).